A 1445-amino-acid polypeptide reads, in one-letter code: Spermatogenesis-associated protein 31E1 (1445 aa).

The chain crosses the membrane as a helical span at residues 64-84 (WMMDFILTSVCGLVLLFLLLL). Disordered regions lie at residues 90–115 (PPSP…SRSR) and 169–262 (VPAK…PDSS). Residues 101 to 110 (SREPQRERSG) are compositionally biased toward basic and acidic residues. A compositionally biased stretch (pro residues) spans 241 to 260 (VFPPSPQPHGPLASSPPPPD). The N-linked (GlcNAc...) asparagine glycan is linked to N408. Disordered stretches follow at residues 411–430 (TQPQ…TVGN), 460–557 (NPSS…ERTQ), 592–619 (LSQP…PGVV), and 637–761 (QEQS…KEHL). Polar residues predominate over residues 664–681 (PQSQAEDTQQALLPSQPS). N-linked (GlcNAc...) asparagine glycosylation is found at N819, N906, and N1160. Disordered regions lie at residues 894 to 966 (FLGK…TCSL), 1143 to 1242 (RLPT…IGDK), 1254 to 1280 (KGQT…RKGG), and 1378 to 1445 (SPKA…CLAS). Polar residues-rich tracts occupy residues 906–915 (NRTTSKSVPT) and 1148–1165 (APLS…TASQ). The span at 1202–1217 (DKGEAHRRPRTGEQGH) shows a compositional bias: basic and acidic residues.

Belongs to the SPATA31 family.

It localises to the membrane. Its function is as follows. May play a role in spermatogenesis. The sequence is that of Spermatogenesis-associated protein 31E1 (SPATA31E1) from Homo sapiens (Human).